The chain runs to 506 residues: Cytochrome P450 monooxygenase tpcB (506 aa).

Residue Cys450 coordinates heme.

It belongs to the cytochrome P450 family. Heme serves as cofactor.

Its pathway is secondary metabolite biosynthesis; terpenoid biosynthesis. Cytochrome P450 monooxygenase; part of the gene cluster that mediates the biosynthesis of terpestacin. The bifunctional terpene synthase tpcA converts isopentenyl diphosphate (IPP) and dimethylallyl diphosphate (DMAPP) into the sesterterpene preterpestacin I. The C-terminal prenyltransferase (PT) domain of tpcA catalyzes formation of GFPP, whereas the N-terminal terpene cyclase (TC) domain catalyzes the cyclization of GFPP into preterpestacin I. The cytochrome P450 monooxygenase tpcB then hydroxylates preterpestacin I to yield 24-hydroxypreterpstacin I (renamed as preterpestacin II) whereas the cytochrome P450 monooxygenase tpcC further hydroxylates preterpestacin II to yield 16,17-dihydroxypreterpestacin II (renamed as preterpestacin III). Finally, the FAD-dependent monooxygenase tpcD converts preterpestacin III into terpestacin. In Cochliobolus heterostrophus (strain C5 / ATCC 48332 / race O) (Southern corn leaf blight fungus), this protein is Cytochrome P450 monooxygenase tpcB.